The following is a 99-amino-acid chain: Aspartyl/glutamyl-tRNA(Asn/Gln) amidotransferase subunit C (99 aa).

The protein belongs to the GatC family. As to quaternary structure, heterotrimer of A, B and C subunits.

It carries out the reaction L-glutamyl-tRNA(Gln) + L-glutamine + ATP + H2O = L-glutaminyl-tRNA(Gln) + L-glutamate + ADP + phosphate + H(+). It catalyses the reaction L-aspartyl-tRNA(Asn) + L-glutamine + ATP + H2O = L-asparaginyl-tRNA(Asn) + L-glutamate + ADP + phosphate + 2 H(+). Its function is as follows. Allows the formation of correctly charged Asn-tRNA(Asn) or Gln-tRNA(Gln) through the transamidation of misacylated Asp-tRNA(Asn) or Glu-tRNA(Gln) in organisms which lack either or both of asparaginyl-tRNA or glutaminyl-tRNA synthetases. The reaction takes place in the presence of glutamine and ATP through an activated phospho-Asp-tRNA(Asn) or phospho-Glu-tRNA(Gln). The protein is Aspartyl/glutamyl-tRNA(Asn/Gln) amidotransferase subunit C of Methylibium petroleiphilum (strain ATCC BAA-1232 / LMG 22953 / PM1).